Consider the following 111-residue polypeptide: Cell cycle protein GpsB (111 aa).

Residues 38 to 72 (IKDYEAFHKEFDQLKQQNARLKRELEEQKVAATQV) are a coiled coil.

It belongs to the GpsB family. In terms of assembly, forms polymers through the coiled coil domains. Interacts with PBP1, MreC and EzrA.

Its subcellular location is the cytoplasm. Divisome component that associates with the complex late in its assembly, after the Z-ring is formed, and is dependent on DivIC and PBP2B for its recruitment to the divisome. Together with EzrA, is a key component of the system that regulates PBP1 localization during cell cycle progression. Its main role could be the removal of PBP1 from the cell pole after pole maturation is completed. Also contributes to the recruitment of PBP1 to the division complex. Not essential for septum formation. The sequence is that of Cell cycle protein GpsB from Bacillus mycoides (strain KBAB4) (Bacillus weihenstephanensis).